Here is a 234-residue protein sequence, read N- to C-terminus: MGLMNRSKNDEYVKLLGAWPSPFVLRTRIALNLKNVAYEYLEEEDTLSSESVLNYNPVHKQIPILIHGNKPIRESLNIVMYVDETWLSGPPILPSDPFDRAVARFWDVYIDEHCFTSINGVAVAKGEENINAAIAKLEQCMALLEETFQECSKGRGFFGGENIGFIDIGFGSMLGPLTVLEKFTGVKFIHPENTPGLFHWADRFYAHEAVKPVMPDIEKLVQFARLKFNTSIFK.

The region spanning 11-90 (EYVKLLGAWP…YVDETWLSGP (80 aa)) is the GST N-terminal domain. Residues 21-22 (SP), 47-48 (LS), 61-62 (QI), and 74-75 (ES) each bind glutathione. The GST C-terminal domain occupies 96 to 228 (DPFDRAVARF…KLVQFARLKF (133 aa)).

Belongs to the GST superfamily. Tau family.

Its subcellular location is the cytoplasm. It localises to the cytosol. It catalyses the reaction RX + glutathione = an S-substituted glutathione + a halide anion + H(+). May be involved in the conjugation of reduced glutathione to a wide number of exogenous and endogenous hydrophobic electrophiles and have a detoxification role against certain herbicides. The protein is Glutathione S-transferase U11 (GSTU11) of Arabidopsis thaliana (Mouse-ear cress).